Consider the following 296-residue polypeptide: GTPase Era (296 aa).

In terms of domain architecture, Era-type G spans lysine 7–glutamate 173. The interval glycine 15–serine 22 is G1. GTP is bound at residue glycine 15–serine 22. The G2 stretch occupies residues glutamine 41 to asparagine 45. A G3 region spans residues aspartate 62–glycine 65. GTP contacts are provided by residues aspartate 62–isoleucine 66 and asparagine 122–aspartate 125. Residues asparagine 122–aspartate 125 form a G4 region. Residues isoleucine 152 to alanine 154 form a G5 region. In terms of domain architecture, KH type-2 spans threonine 204–glutamate 281.

This sequence belongs to the TRAFAC class TrmE-Era-EngA-EngB-Septin-like GTPase superfamily. Era GTPase family. As to quaternary structure, monomer.

It localises to the cytoplasm. It is found in the cell inner membrane. Functionally, an essential GTPase that binds both GDP and GTP, with rapid nucleotide exchange. Plays a role in 16S rRNA processing and 30S ribosomal subunit biogenesis and possibly also in cell cycle regulation and energy metabolism. The polypeptide is GTPase Era (Trichlorobacter lovleyi (strain ATCC BAA-1151 / DSM 17278 / SZ) (Geobacter lovleyi)).